A 660-amino-acid polypeptide reads, in one-letter code: Phosphatidylinositol-binding clathrin assembly protein (660 aa).

The residue at position 2 (serine 2) is an N-acetylserine. The 132-residue stretch at 14–145 (QHSVTGSAVS…VSYRQVAFDF (132 aa)) folds into the ENTH domain. Residues serine 16 and serine 20 each carry the phosphoserine modification. Residues 221–294 (KYFDMKKNQC…LEGKKIKDST (74 aa)) are interaction with PIMREG. Lysine 238 is covalently cross-linked (Glycyl lysine isopeptide (Lys-Gly) (interchain with G-Cter in SUMO2)). Phosphoserine is present on residues serine 303 and serine 315. Polar residues predominate over residues 556 to 566 (GTTKNDVSWSQ). The interval 556 to 580 (GTTKNDVSWSQPGEKKLTGGSNWQP) is disordered.

The protein belongs to the PICALM/SNAP91 family. In terms of assembly, binds to clathrin; involves primarily the C-terminal sequences, but the full-length protein is required for full binding capacity. Binds phosphatidylinositol 4,5- bisphosphate. Interacts with PIMREG; this interaction may change the subcellular location into the nucleus. Interacts with AP2A1 (via its alpha-appendage domain). Interacts (via N-terminus) with VAMP2; VAMP3; VAMP7 and VAMP8 (Via N-terminus). Interacts with LC3/MAP1LC3A. In terms of tissue distribution, skins and livers of 1-week-old mice.

It is found in the cell membrane. The protein localises to the membrane. Its subcellular location is the clathrin-coated pit. The protein resides in the golgi apparatus. It localises to the cytoplasmic vesicle. It is found in the clathrin-coated vesicle. The protein localises to the nucleus. Its function is as follows. Cytoplasmic adapter protein that plays a critical role in clathrin-mediated endocytosis which is important in processes such as internalization of cell receptors, synaptic transmission or removal of apoptotic cells. Recruits AP-2 and attaches clathrin triskelions to the cytoplasmic side of plasma membrane leading to clathrin-coated vesicles (CCVs) assembly. Furthermore, regulates clathrin-coated vesicle size and maturation by directly sensing and driving membrane curvature. In addition to binding to clathrin, mediates the endocytosis of small R-SNARES (Soluble NSF Attachment Protein REceptors) between plasma membranes and endosomes including VAMP2, VAMP3, VAMP4, VAMP7 or VAMP8. In turn, PICALM-dependent SNARE endocytosis is required for the formation and maturation of autophagic precursors. Modulates thereby autophagy and the turnover of autophagy substrates such as MAPT/TAU or amyloid precursor protein cleaved C-terminal fragment (APP-CTF). The polypeptide is Phosphatidylinositol-binding clathrin assembly protein (Picalm) (Mus musculus (Mouse)).